Reading from the N-terminus, the 274-residue chain is Purine nucleoside phosphorylase 1 (274 aa).

Phosphate is bound by residues serine 29, histidine 60, 80–82, and alanine 112; that span reads RFH. Serine 29 is subject to Phosphoserine. Glutamate 192 is a binding site for a purine D-ribonucleoside. Serine 211 contributes to the phosphate binding site. An a purine D-ribonucleoside-binding site is contributed by asparagine 234.

This sequence belongs to the PNP/MTAP phosphorylase family. As to quaternary structure, homotrimer.

It catalyses the reaction a purine D-ribonucleoside + phosphate = a purine nucleobase + alpha-D-ribose 1-phosphate. The enzyme catalyses a purine 2'-deoxy-D-ribonucleoside + phosphate = a purine nucleobase + 2-deoxy-alpha-D-ribose 1-phosphate. It functions in the pathway purine metabolism; purine nucleoside salvage. The purine nucleoside phosphorylases catalyze the phosphorolytic breakdown of the N-glycosidic bond in the beta-(deoxy)ribonucleoside molecules, with the formation of the corresponding free purine bases and pentose-1-phosphate. Cleaves guanosine, inosine, 2'-deoxyguanosine and 2'-deoxyinosine. This is Purine nucleoside phosphorylase 1 (punA) from Geobacillus stearothermophilus (Bacillus stearothermophilus).